The following is a 277-amino-acid chain: Bleomycin hydrolase (277 aa).

The active site involves Cys53.

The protein belongs to the peptidase C1 family. Homohexamer. Interacts with NUDT12 (via ANK repeats).

Its subcellular location is the cytoplasm. It is found in the cytoplasmic granule. It carries out the reaction Inactivates bleomycin B2 (a cytotoxic glycometallopeptide) by hydrolysis of a carboxyamide bond of beta-aminoalanine, but also shows general aminopeptidase activity. The specificity varies somewhat with source, but amino acid arylamides of Met, Leu and Ala are preferred.. Its activity is regulated as follows. Strongly inhibited by leupeptin, puromycin, NEM, and divalent cations. Its function is as follows. The normal physiological role of BLM hydrolase is unknown, but it catalyzes the inactivation of the antitumor drug BLM (a glycopeptide) by hydrolyzing the carboxamide bond of its B-aminoalaninamide moiety thus protecting normal and malignant cells from BLM toxicity. This chain is Bleomycin hydrolase (BLMH), found in Oryctolagus cuniculus (Rabbit).